We begin with the raw amino-acid sequence, 320 residues long: ATP-dependent 6-phosphofructokinase (320 aa).

Position 12 (Gly-12) interacts with ATP. 22–26 (RGVVR) provides a ligand contact to ADP. ATP-binding positions include 73–74 (RF) and 103–106 (GDGS). Position 104 (Asp-104) interacts with Mg(2+). 126–128 (TID) provides a ligand contact to substrate. The active-site Proton acceptor is Asp-128. Arg-155 is a binding site for ADP. Substrate-binding positions include Arg-163 and 170–172 (MGR). Residues 186 to 188 (GCE), Lys-212, and 214 to 216 (KKH) contribute to the ADP site. Substrate is bound by residues Glu-223, Arg-244, and 250 to 253 (HIQR).

Belongs to the phosphofructokinase type A (PFKA) family. ATP-dependent PFK group I subfamily. Prokaryotic clade 'B1' sub-subfamily. Homotetramer. Requires Mg(2+) as cofactor.

The protein localises to the cytoplasm. The catalysed reaction is beta-D-fructose 6-phosphate + ATP = beta-D-fructose 1,6-bisphosphate + ADP + H(+). It functions in the pathway carbohydrate degradation; glycolysis; D-glyceraldehyde 3-phosphate and glycerone phosphate from D-glucose: step 3/4. Allosterically activated by ADP and other diphosphonucleosides, and allosterically inhibited by phosphoenolpyruvate. In terms of biological role, catalyzes the phosphorylation of D-fructose 6-phosphate to fructose 1,6-bisphosphate by ATP, the first committing step of glycolysis. This is ATP-dependent 6-phosphofructokinase from Edwardsiella ictaluri (strain 93-146).